The sequence spans 332 residues: MQQYSSKYNKQAILLVNLGTPDNYDTKSIKRYLKEFLSDPRVIEANPILWKIILNLIILPIRAKKNIHTYKTVWNKQHNKSPLLFYTENLADKLDKKLDNYIVDYAMRYGNPSIESKIKSLQDQGATEIIIFPLYPQYSATTATVYDEVYRVLSKLRWQPTIKGINPYYDNKFHIQTISQQIKEHLKKLDSTPDTVLFSFHGLPKEYFDKGDPYYCHCYKTYRLVKEELQNEYPNIDFELSFQSRFGPKKWLEPYTTVKLEEFAKQNKSVVIIAPGFSADCLETLEELAISEKENFIKKGGKEFSLIPCLNDSNQHVDMLYNIIDEEICLKK.

The Fe cation site is built by His201 and Glu283.

The protein belongs to the ferrochelatase family.

It localises to the cytoplasm. The enzyme catalyses heme b + 2 H(+) = protoporphyrin IX + Fe(2+). It functions in the pathway porphyrin-containing compound metabolism; protoheme biosynthesis; protoheme from protoporphyrin-IX: step 1/1. Its function is as follows. Catalyzes the ferrous insertion into protoporphyrin IX. The protein is Ferrochelatase of Francisella tularensis subsp. holarctica (strain FTNF002-00 / FTA).